The chain runs to 971 residues: uncharacterized protein (971 aa).

Residues 1 to 24 (MQSNLLKVLGVLAIVATLVCFIFA) form the signal peptide. The interval 127–146 (RTRPGKSNLDDSNQMIPIPR) is disordered. A run of 6 helical transmembrane segments spans residues 611 to 631 (IKAILILYVMTYGAMFLLGFA), 721 to 741 (LGLSGIIYFIITFIAVCIVII), 753 to 773 (AFMATCILIGIAPLFISFLLF), 795 to 815 (VVMMAGIIVLTQLFTIYLDFV), 832 to 852 (FIGTILPIALLNVPIFCINWF), and 865 to 885 (GVNMQNIVALVIIAYGMYGYV). The span at 933–944 (TSRAKSRLKQRN) shows a compositional bias: basic residues. A disordered region spans residues 933-971 (TSRAKSRLKQRNRTLEHAEQNSKKYMKKIGENTNEGTLK). The segment covering 945-954 (RTLEHAEQNS) has biased composition (basic and acidic residues).

The protein belongs to the TrbL/VirB6 family.

The protein resides in the cell membrane. This is an uncharacterized protein from Rickettsia typhi (strain ATCC VR-144 / Wilmington).